Reading from the N-terminus, the 520-residue chain is Ribonuclease Y (520 aa).

The chain crosses the membrane as a helical span at residues 5 to 25 (ITIISSLLFLIVGLVVGSLIF). The tract at residues 70-127 (RTEIENELRGRRTETQKAENRLLQREENLDRKDTSLSKREATLERKEESISKRQQQIE) is disordered. The 64-residue stretch at 210 to 273 (TVSVVTLPND…EIARIALEKL (64 aa)) folds into the KH domain. The HD domain maps to 336 to 429 (VLNHSLEVSK…VAAADALSAA (94 aa)).

This sequence belongs to the RNase Y family.

The protein localises to the cell membrane. Functionally, endoribonuclease that initiates mRNA decay. The sequence is that of Ribonuclease Y from Listeria welshimeri serovar 6b (strain ATCC 35897 / DSM 20650 / CCUG 15529 / CIP 8149 / NCTC 11857 / SLCC 5334 / V8).